The following is an 853-amino-acid chain: DNA mismatch repair protein MutS (853 aa).

ATP is bound at residue 614–621 (GPNMGGKS).

It belongs to the DNA mismatch repair MutS family.

Functionally, this protein is involved in the repair of mismatches in DNA. It is possible that it carries out the mismatch recognition step. This protein has a weak ATPase activity. This Escherichia coli O1:K1 / APEC protein is DNA mismatch repair protein MutS.